The chain runs to 423 residues: Putative competence-damage inducible protein (423 aa).

Belongs to the CinA family.

The protein is Putative competence-damage inducible protein of Streptococcus pyogenes serotype M4 (strain MGAS10750).